Here is a 297-residue protein sequence, read N- to C-terminus: Probable oxidoreductase (297 aa).

Position 9-33 (9-33 (VVTGGASGLGAETVRALAAAGAEVT)) interacts with NAD(+). S138 contacts substrate. Y164 (proton acceptor) is an active-site residue.

It belongs to the short-chain dehydrogenases/reductases (SDR) family.

The protein is Probable oxidoreductase of Streptomyces lividans.